The following is a 542-amino-acid chain: Cytochrome P450 79B1 (542 aa).

A helical membrane pass occupies residues Phe21–Leu41. Cys478 contributes to the heme binding site.

It belongs to the cytochrome P450 family. Heme is required as a cofactor.

It is found in the membrane. Converts tyrosine to para-hydrophenylacetaldoxime in para-hydroxybenzylglucosinolate biosynthesis. This is Cytochrome P450 79B1 (CYP79B1) from Sinapis alba (White mustard).